A 156-amino-acid polypeptide reads, in one-letter code: Extracellular giant hemoglobin major globin subunit A1 (156 aa).

An N-terminal signal peptide occupies residues 1–16 (MKVLIIFACLVVMASA). The region spanning 17–156 (VCNRLEQILV…YERIASGISG (140 aa)) is the Globin domain. A disulfide bridge connects residues C18 and C146. A hydrogen sulfide-binding site is contributed by C79. H110 lines the heme b pocket.

Belongs to the globin family. In terms of assembly, the 400 kDa hemoglobin consists of a spherical 24-mer arranged as a double layer of dome-shaped dodecamers. Each dodecamer is composed of the 3-fold trimer of the tetramer A1-A2-B1-B2 having one intra-tetramer (A1-B2) disulfide bond and one inter-tetramer (B1-B2) disulfide bond per tetramer.

The protein localises to the secreted. In terms of biological role, the extracellular giant hemoglobin is able to bind and transport oxygen and hydrosulfide simultaneously and reversibly at two different sites. In Oligobrachia mashikoi (Beard worm), this protein is Extracellular giant hemoglobin major globin subunit A1 (ghbA1).